The primary structure comprises 177 residues: ATP synthase subunit delta (177 aa).

It belongs to the ATPase delta chain family. In terms of assembly, F-type ATPases have 2 components, F(1) - the catalytic core - and F(0) - the membrane proton channel. F(1) has five subunits: alpha(3), beta(3), gamma(1), delta(1), epsilon(1). F(0) has three main subunits: a(1), b(2) and c(10-14). The alpha and beta chains form an alternating ring which encloses part of the gamma chain. F(1) is attached to F(0) by a central stalk formed by the gamma and epsilon chains, while a peripheral stalk is formed by the delta and b chains.

Its subcellular location is the cell inner membrane. Functionally, f(1)F(0) ATP synthase produces ATP from ADP in the presence of a proton or sodium gradient. F-type ATPases consist of two structural domains, F(1) containing the extramembraneous catalytic core and F(0) containing the membrane proton channel, linked together by a central stalk and a peripheral stalk. During catalysis, ATP synthesis in the catalytic domain of F(1) is coupled via a rotary mechanism of the central stalk subunits to proton translocation. This protein is part of the stalk that links CF(0) to CF(1). It either transmits conformational changes from CF(0) to CF(1) or is implicated in proton conduction. The polypeptide is ATP synthase subunit delta (Haemophilus ducreyi (strain 35000HP / ATCC 700724)).